Consider the following 299-residue polypeptide: METEGRRREVVVSSLQFACSDDISTNVAAAERLVREAHAKGANIILIQELFEGYYFCQAQREDFFKRAKPYKNHPTIARMQKLAKELGVVIPVSFFEEANTAHYNSIAIIDADGTDLGIYRKSHIPDGPGYQEKFYFNPGDTGFKVFQTKFAKIGVAICWDQWFPEAARAMVLQGAEILFYPTAIGSEPQDQGLDSRDHWRRVMQGHAGANVVPLVASNRIGKEIIETEHGPSQITFYGTSFIAGPTGEIVAEADDKSEAVLVAQFDLDMIKSKRQSWGVFRDRRPDLYKVLLTMDGNL.

The region spanning 10-268 (VVVSSLQFAC…EAVLVAQFDL (259 aa)) is the CN hydrolase domain. The Proton acceptor role is filled by glutamate 49. The Proton donor role is filled by lysine 122. Residue cysteine 159 is the Nucleophile of the active site.

It belongs to the carbon-nitrogen hydrolase superfamily. Homooctamer (isoform 2). Expressed in roots, stems, leaves and flowers.

It catalyses the reaction N-carbamoylputrescine + H2O + 2 H(+) = putrescine + NH4(+) + CO2. Its pathway is amine and polyamine biosynthesis; putrescine biosynthesis via agmatine pathway; putrescine from N-carbamoylputrescine (amidase route): step 1/1. Functionally, involved in polyamine biosynthesis. Catalyzes the hydrolysis of N-carbamoylputrescine to produce putrescine and ammonia. This chain is N-carbamoylputrescine amidase, found in Arabidopsis thaliana (Mouse-ear cress).